A 301-amino-acid chain; its full sequence is Probable alpha-L-glutamate ligase (301 aa).

Residues 104-287 (MQLLSRKGIG…VAGLIIDFIE (184 aa)) enclose the ATP-grasp domain. ATP is bound by residues K141, 178-179 (EF), D187, and 211-213 (RSN). Residues D248, E260, and N262 each contribute to the Mg(2+) site. Mn(2+)-binding residues include D248, E260, and N262.

It belongs to the RimK family. Mg(2+) is required as a cofactor. Requires Mn(2+) as cofactor.

This Aliivibrio fischeri (strain MJ11) (Vibrio fischeri) protein is Probable alpha-L-glutamate ligase.